Consider the following 209-residue polypeptide: Uracil phosphoribosyltransferase (209 aa).

5-phospho-alpha-D-ribose 1-diphosphate-binding positions include arginine 79, arginine 104, and 131-139 (TPVVATANT). Uracil is bound by residues isoleucine 194 and 199–201 (GDA). Aspartate 200 contacts 5-phospho-alpha-D-ribose 1-diphosphate.

This sequence belongs to the UPRTase family. It depends on Mg(2+) as a cofactor.

The enzyme catalyses UMP + diphosphate = 5-phospho-alpha-D-ribose 1-diphosphate + uracil. It participates in pyrimidine metabolism; UMP biosynthesis via salvage pathway; UMP from uracil: step 1/1. Allosterically activated by GTP. Functionally, catalyzes the conversion of uracil and 5-phospho-alpha-D-ribose 1-diphosphate (PRPP) to UMP and diphosphate. The chain is Uracil phosphoribosyltransferase from Bradyrhizobium diazoefficiens (strain JCM 10833 / BCRC 13528 / IAM 13628 / NBRC 14792 / USDA 110).